A 66-amino-acid chain; its full sequence is Large ribosomal subunit protein bL35 (66 aa).

The tract at residues 20-40 (GKIKSTQSAKRHGMTKRSKRS) is disordered. Over residues 28 to 40 (AKRHGMTKRSKRS) the composition is skewed to basic residues.

This sequence belongs to the bacterial ribosomal protein bL35 family.

The polypeptide is Large ribosomal subunit protein bL35 (Ehrlichia chaffeensis (strain ATCC CRL-10679 / Arkansas)).